A 285-amino-acid chain; its full sequence is Bis(5'-nucleosyl)-tetraphosphatase, symmetrical (285 aa).

Belongs to the Ap4A hydrolase family.

The enzyme catalyses P(1),P(4)-bis(5'-adenosyl) tetraphosphate + H2O = 2 ADP + 2 H(+). In terms of biological role, hydrolyzes diadenosine 5',5'''-P1,P4-tetraphosphate to yield ADP. The protein is Bis(5'-nucleosyl)-tetraphosphatase, symmetrical of Colwellia psychrerythraea (strain 34H / ATCC BAA-681) (Vibrio psychroerythus).